The chain runs to 188 residues: Elongation factor P (188 aa).

It belongs to the elongation factor P family.

The protein localises to the cytoplasm. The protein operates within protein biosynthesis; polypeptide chain elongation. In terms of biological role, involved in peptide bond synthesis. Stimulates efficient translation and peptide-bond synthesis on native or reconstituted 70S ribosomes in vitro. Probably functions indirectly by altering the affinity of the ribosome for aminoacyl-tRNA, thus increasing their reactivity as acceptors for peptidyl transferase. The protein is Elongation factor P of Bifidobacterium longum (strain DJO10A).